A 489-amino-acid chain; its full sequence is Glutamyl-tRNA(Gln) amidotransferase subunit A (489 aa).

Active-site charge relay system residues include lysine 80 and serine 160. Catalysis depends on serine 184, which acts as the Acyl-ester intermediate.

It belongs to the amidase family. GatA subfamily. In terms of assembly, heterotrimer of A, B and C subunits.

It carries out the reaction L-glutamyl-tRNA(Gln) + L-glutamine + ATP + H2O = L-glutaminyl-tRNA(Gln) + L-glutamate + ADP + phosphate + H(+). Functionally, allows the formation of correctly charged Gln-tRNA(Gln) through the transamidation of misacylated Glu-tRNA(Gln) in organisms which lack glutaminyl-tRNA synthetase. The reaction takes place in the presence of glutamine and ATP through an activated gamma-phospho-Glu-tRNA(Gln). In Wolbachia pipientis wMel, this protein is Glutamyl-tRNA(Gln) amidotransferase subunit A.